Reading from the N-terminus, the 130-residue chain is Cholecystokinin (130 aa).

A signal peptide spans 1–20 (MYSGICIYMFLAMLSTSSSG). Residues 21–60 (QQATGSHNENPVATELEQSLTEHHRHVRVPSSAGQLKPIQ) constitute a propeptide that is removed on maturation. A Sulfotyrosine modification is found at Tyr112. Phe118 carries the post-translational modification Phenylalanine amide. A propeptide spanning residues 122–130 (SAEEYEYSS) is cleaved from the precursor. Sulfotyrosine occurs at positions 126 and 128.

This sequence belongs to the gastrin/cholecystokinin family. In terms of processing, the precursor is cleaved by proteases to produce a number of active cholecystokinins. In terms of tissue distribution, expressed in brain, duodenum and small intestine.

The protein resides in the secreted. This peptide hormone induces gall bladder contraction and the release of pancreatic enzymes in the gut. Its function in the brain is not clear. The sequence is that of Cholecystokinin from Trachemys scripta (Red-eared slider turtle).